The primary structure comprises 542 residues: Chaperonin GroEL (542 aa).

ATP is bound by residues 29 to 32 (TMGP), Lys50, 86 to 90 (DGTTT), Gly414, 477 to 479 (NAA), and Asp493.

Belongs to the chaperonin (HSP60) family. As to quaternary structure, forms a cylinder of 14 subunits composed of two heptameric rings stacked back-to-back. Interacts with the co-chaperonin GroES.

The protein localises to the cytoplasm. The enzyme catalyses ATP + H2O + a folded polypeptide = ADP + phosphate + an unfolded polypeptide.. Functionally, together with its co-chaperonin GroES, plays an essential role in assisting protein folding. The GroEL-GroES system forms a nano-cage that allows encapsulation of the non-native substrate proteins and provides a physical environment optimized to promote and accelerate protein folding. In Sulfurovum sp. (strain NBC37-1), this protein is Chaperonin GroEL.